The chain runs to 141 residues: MATIAQLIRKPRRHKVKKSKSPALQVNLNTLEKKVTSKSSPFKRGVCTRVGTMTPKKPNSALRKYAKVKLTNGMEVLAYIPGEGHNLQEHSVVLIRGGRVKDLPGVRYHIVRGTLDTTGVDKRRQQRSAYGAKRPKADKKK.

The interval 118–141 (TGVDKRRQQRSAYGAKRPKADKKK) is disordered.

Belongs to the universal ribosomal protein uS12 family. In terms of assembly, part of the 30S ribosomal subunit. Contacts proteins S8 and S17. May interact with IF1 in the 30S initiation complex.

Its function is as follows. With S4 and S5 plays an important role in translational accuracy. Functionally, interacts with and stabilizes bases of the 16S rRNA that are involved in tRNA selection in the A site and with the mRNA backbone. Located at the interface of the 30S and 50S subunits, it traverses the body of the 30S subunit contacting proteins on the other side and probably holding the rRNA structure together. The combined cluster of proteins S8, S12 and S17 appears to hold together the shoulder and platform of the 30S subunit. The protein is Small ribosomal subunit protein uS12 of Mycoplasmoides gallisepticum (strain R(low / passage 15 / clone 2)) (Mycoplasma gallisepticum).